A 325-amino-acid chain; its full sequence is UPF0285 protein MmarC5_0962 (325 aa).

It belongs to the UPF0285 family.

This Methanococcus maripaludis (strain C5 / ATCC BAA-1333) protein is UPF0285 protein MmarC5_0962.